The primary structure comprises 1189 residues: Disabled homolog 2-interacting protein (1189 aa).

A disordered region spans residues 1 to 75 (MSAGGNARKS…EPSASTPFRV (75 aa)). Positions 20–38 (LLRRPRLQRQRSRSRSRTR) are enriched in basic residues. Basic and acidic residues predominate over residues 39 to 49 (PARESPQERPG). Over residues 59-73 (SEKNPSMEPSASTPF) the composition is skewed to polar residues. Residues 101-202 (SFRHILPGFR…WMENLRRAVH (102 aa)) enclose the PH domain. A C2 domain is found at 193 to 311 (WMENLRRAVH…AGRQFVEKWY (119 aa)). The Ras-GAP domain occupies 387–595 (GKVKDFLTDL…TNMQRFLLEI (209 aa)). The necessary for interaction with AKT1 stretch occupies residues 646 to 943 (LRDVHTALST…RTPPTLLSTL (298 aa)). Residues 653–668 (LSTPGSGQLPGTNDLA) are compositionally biased toward polar residues. Disordered regions lie at residues 653 to 679 (LSTPGSGQLPGTNDLASTPGSGSSSVS) and 715 to 738 (RSSGVQPSPARSSSYSEANEPDLQ). The span at 669-679 (STPGSGSSSVS) shows a compositional bias: low complexity. Over residues 715–731 (RSSGVQPSPARSSSYSE) the composition is skewed to polar residues. The residue at position 728 (Ser-728) is a Phosphoserine; by MAP3K5 and RIPK1. Ser-747 is subject to Phosphoserine. 5 disordered regions span residues 804-823 (VPTPTTPGTSEGAPGRPQLL), 843-865 (PRGLGDSGSEGHSSLSSHSNSEE), 895-998 (SLTE…SPNA), 1015-1034 (EDEGLGPDPPHRDRLRSKEE), and 1163-1189 (ARNGVSPTNPTKLQITENGEFRNSSNC). Residues 852-865 (EGHSSLSSHSNSEE) are compositionally biased toward low complexity. Residues 919–931 (QPPPPPPPPPPAP) show a composition bias toward pro residues. Polar residues-rich tracts occupy residues 939-955 (LLSTLQYPRPSSGTLAS) and 967-976 (LRQQSSSSKG). 2 positions are modified to phosphoserine: Ser-978 and Ser-995. Residues 1023–1034 (PPHRDRLRSKEE) show a composition bias toward basic and acidic residues. Residues 1025-1159 (HRDRLRSKEE…SALTQLKERY (135 aa)) adopt a coiled-coil conformation.

In terms of assembly, on plasma membrane, exists in an inactive form complexed with TNFR1; in response to TNF-alpha, dissociates from TNFR1 complex, translocates to cytoplasm and forms part of an intracellular signaling complex comprising TRADD, RIPK1, TRAF2 and MAP3K5. Interacts with DAB1. Part of a cytoplasmic complex made of HIPK1, DAB2IP and MAP3K5 in response to TNF-alpha; this complex formation promotes MAP3K5-JNK activation and subsequent apoptosis. Interacts (via N-terminal domain) with JAK2; the interaction occurs in a IFNG/IFN-gamma-dependent manner and inhibits JAK2 autophosphorylation activity. Interacts (via C2 domain) with GSK3B; the interaction stimulates GSK3B kinase activation. Interacts (via C2 domain) with PPP2CA. Interacts (via proline-rich motif) with a regulatory p85 subunit (via SH3 domain) of the PI3K complex; the interaction inhibits the PI3K-AKT complex activity in a TNF-alpha-dependent manner in prostate cancer (PCa) cells. Interacts with AKT1; the interaction is increased in a TNF-alpha-induced manner. Interacts (via C2 domain and active form preferentially) with KDR/VEGFR2 (tyrosine-phosphorylated active form preferentially); the interaction occurs at the late phase of VEGFA response and inhibits KDR/VEGFR2 activity. Interacts (via N-terminus C2 domain) with MAP3K5 ('Ser-966' dephosphorylated form preferentially); the interaction occurs in a TNF-alpha-induced manner. Interacts (via Ras-GAP domain) with the catalytic subunit of protein phosphatase PP2A; the interaction occurs in resting endothelial cells, is further enhanced by TNF-alpha stimulation and is required to bridge PP2A to MAP3K5. Interacts (via C-terminus PER domain) with TRAF2 (via zinc fingers); the interaction occurs in a TNF-alpha-dependent manner. Interacts with 14-3-3 proteins; the interaction occurs in a TNF-alpha-dependent manner. Interacts (via Ras-GAP domain) with RIPK1 (via kinase domain); the interaction occurs in a TNF-alpha-dependent manner. Interacts (via PH domain) with ERN1. Interacts with TRAF2. Interacts (via NPXY motif) with DAB2 (via PID domain). Interacts with RAB40C; acts as a GAP for RAB40C. In terms of processing, in response to TNF-alpha-induction, phosphorylated at Ser-728; phosphorylation leads to a conformational change, and thus, increases its association with 14-3-3 proteins, MAP3K5, RIPK1 and TRAF2 in endothelial cells; also stimulates regulatory p85 subunit sequestring and PI3K-p85 complex activity inhibition. As to expression, expressed in vascular endothelium of muscle and aorta, in smooth muscle cells of aorta and epithelial cells of lung. Expressed throughout the brain, including olfactory bulb, hypothalamus, cerebellum and cerebral cortex. Expressed in the soma and processes of neurons in a variety of brain structures, including the developing cerebral cortex, CA1 pyramidal neurons and Purkinje cells. Poorly expressed in medulloblastoma cells compared to cerebellar precursor proliferating progenitor cells (at protein level). Highly expressed in the brain, salivary gland, and testis; moderate expression in kidney and heart. Low expression in the lung, seminal vesicle, ventral prostate, epididymis, liver, and bladder. Very low expression in the coagulation gland and skeleton muscles. Lowest expression seen in spleen.

It localises to the cytoplasm. Its subcellular location is the cell membrane. It is found in the membrane. The protein resides in the cell projection. The protein localises to the dendrite. Its function is as follows. Functions as a scaffold protein implicated in the regulation of a large spectrum of both general and specialized signaling pathways. Involved in several processes such as innate immune response, inflammation and cell growth inhibition, apoptosis, cell survival, angiogenesis, cell migration and maturation. Also plays a role in cell cycle checkpoint control; reduces G1 phase cyclin levels resulting in G0/G1 cell cycle arrest. Mediates signal transduction by receptor-mediated inflammatory signals, such as the tumor necrosis factor (TNF), interferon (IFN) or lipopolysaccharide (LPS). Modulates the balance between phosphatidylinositol 3-kinase (PI3K)-AKT-mediated cell survival and apoptosis stimulated kinase (MAP3K5)-JNK signaling pathways; sequesters both AKT1 and MAP3K5 and counterbalances the activity of each kinase by modulating their phosphorylation status in response to pro-inflammatory stimuli. Acts as a regulator of the endoplasmic reticulum (ER) unfolded protein response (UPR) pathway; specifically involved in transduction of the ER stress-response to the JNK cascade through ERN1. Mediates TNF-alpha-induced apoptosis activation by facilitating dissociation of inhibitor 14-3-3 from MAP3K5; recruits the PP2A phosphatase complex which dephosphorylates MAP3K5 on 'Ser-966', leading to the dissociation of 13-3-3 proteins and activation of the MAP3K5-JNK signaling pathway in endothelial cells. Also mediates TNF/TRAF2-induced MAP3K5-JNK activation, while it inhibits CHUK-NF-kappa-B signaling. Acts a negative regulator in the IFN-gamma-mediated JAK-STAT signaling cascade by inhibiting smooth muscle cell (VSMCs) proliferation and intimal expansion, and thus, prevents graft arteriosclerosis (GA). Acts as a GTPase-activating protein (GAP) for the ADP ribosylation factor 6 (ARF6) and Ras. Promotes hydrolysis of the ARF6-bound GTP and thus, negatively regulates phosphatidylinositol 4,5-bisphosphate (PIP2)-dependent TLR4-TIRAP-MyD88 and NF-kappa-B signaling pathways in endothelial cells in response to lipopolysaccharides (LPS). Binds specifically to phosphatidylinositol 4-phosphate (PtdIns4P) and phosphatidylinositol 3-phosphate (PtdIns3P). In response to vascular endothelial growth factor (VEGFA), acts as a negative regulator of the VEGFR2-PI3K-mediated angiogenic signaling pathway by inhibiting endothelial cell migration and tube formation. In the developing brain, promotes both the transition from the multipolar to the bipolar stage and the radial migration of cortical neurons from the ventricular zone toward the superficial layer of the neocortex in a glial-dependent locomotion process. Probable downstream effector of the Reelin signaling pathway; promotes Purkinje cell (PC) dendrites development and formation of cerebellar synapses. Also functions as a tumor suppressor protein in prostate cancer progression; prevents cell proliferation and epithelial-to-mesenchymal transition (EMT) through activation of the glycogen synthase kinase-3 beta (GSK3B)-induced beta-catenin and inhibition of PI3K-AKT and Ras-MAPK survival downstream signaling cascades, respectively. In Mus musculus (Mouse), this protein is Disabled homolog 2-interacting protein (Dab2ip).